The following is a 287-amino-acid chain: Endolytic peptidoglycan transglycosylase RlpA (287 aa).

The first 25 residues, 1–25, serve as a signal peptide directing secretion; sequence MKLKTGLNLTALLLFMISVAFPAQA. The SPOR domain maps to 209–284; sequence LKGTEFYCLK…ANNKPLIVYT (76 aa).

The protein belongs to the RlpA family.

Functionally, lytic transglycosylase with a strong preference for naked glycan strands that lack stem peptides. In Haemophilus influenzae (strain ATCC 51907 / DSM 11121 / KW20 / Rd), this protein is Endolytic peptidoglycan transglycosylase RlpA.